We begin with the raw amino-acid sequence, 328 residues long: Phenylalanine--tRNA ligase alpha subunit (328 aa).

Glu-245 is a Mg(2+) binding site.

It belongs to the class-II aminoacyl-tRNA synthetase family. Phe-tRNA synthetase alpha subunit type 1 subfamily. As to quaternary structure, tetramer of two alpha and two beta subunits. Mg(2+) serves as cofactor.

Its subcellular location is the cytoplasm. The enzyme catalyses tRNA(Phe) + L-phenylalanine + ATP = L-phenylalanyl-tRNA(Phe) + AMP + diphosphate + H(+). The chain is Phenylalanine--tRNA ligase alpha subunit from Helicobacter pylori (strain Shi470).